We begin with the raw amino-acid sequence, 150 residues long: Globin (150 aa).

The 140-residue stretch at 11-150 (PLSAAEKTKI…MICILLRSAY (140 aa)) folds into the Globin domain. Residues H74 and H106 each contribute to the heme b site.

It belongs to the globin family. As to quaternary structure, monomer.

The polypeptide is Globin (Lampetra fluviatilis (European river lamprey)).